We begin with the raw amino-acid sequence, 719 residues long: Alpha-galactosidase 2 (719 aa).

Asp-472 acts as the Nucleophile in catalysis. Asp-542 (proton donor) is an active-site residue.

It belongs to the glycosyl hydrolase 36 family.

It catalyses the reaction Hydrolysis of terminal, non-reducing alpha-D-galactose residues in alpha-D-galactosides, including galactose oligosaccharides, galactomannans and galactolipids.. Its function is as follows. Alpha-galactosidase associated with the sucrase operon. In Pediococcus pentosaceus, this protein is Alpha-galactosidase 2 (agaS).